The sequence spans 101 residues: Small ribosomal subunit protein uS14 (101 aa).

It belongs to the universal ribosomal protein uS14 family. In terms of assembly, part of the 30S ribosomal subunit. Contacts proteins S3 and S10.

Its function is as follows. Binds 16S rRNA, required for the assembly of 30S particles and may also be responsible for determining the conformation of the 16S rRNA at the A site. This chain is Small ribosomal subunit protein uS14, found in Ectopseudomonas mendocina (strain ymp) (Pseudomonas mendocina).